The following is a 113-amino-acid chain: Ig heavy chain V-III region U61 (113 aa).

The 113-residue stretch at 1-113 (EVKLEESGGG…YWGQGTLVPV (113 aa)) folds into the Ig-like domain. A disulfide bridge links Cys-22 with Cys-98.

In Mus musculus (Mouse), this protein is Ig heavy chain V-III region U61.